Here is a 540-residue protein sequence, read N- to C-terminus: Chaperonin GroEL (540 aa).

Residues 29–32 (TLGP), 86–90 (DGTTT), G413, 476–478 (NAA), and D492 contribute to the ATP site.

This sequence belongs to the chaperonin (HSP60) family. Forms a cylinder of 14 subunits composed of two heptameric rings stacked back-to-back. Interacts with the co-chaperonin GroES.

Its subcellular location is the cytoplasm. The catalysed reaction is ATP + H2O + a folded polypeptide = ADP + phosphate + an unfolded polypeptide.. In terms of biological role, together with its co-chaperonin GroES, plays an essential role in assisting protein folding. The GroEL-GroES system forms a nano-cage that allows encapsulation of the non-native substrate proteins and provides a physical environment optimized to promote and accelerate protein folding. This Streptococcus pneumoniae (strain P1031) protein is Chaperonin GroEL.